The sequence spans 2684 residues: Teneurin-1 (2684 aa).

Disordered stretches follow at residues 1-37, 127-156, and 170-204; these read MFQH…HDYT, TTSS…PTYS, and GTNQ…KKFD. Over 1–216 the chain is Cytoplasmic; it reads MFQHRTTNAQ…SDTCSRWPSK (216 aa). Over residues 11-24 the composition is skewed to pro residues; sequence GPPPNRPMPRPPAG. Positions 127–136 are enriched in low complexity; the sequence is TTSSTLSPAS. A helical transmembrane segment spans residues 217–237; that stretch reads WNILLAAALLVALFVICILLF. The Extracellular portion of the chain corresponds to 238–2684; it reads RAPNYVYTQP…VHSWKFRKSE (2447 aa). 2 consecutive EGF-like domains span residues 463 to 499 and 501 to 534; these read TGRT…KECE and RHNW…EACE. 6 disulfide bridges follow: Cys-467–Cys-476, Cys-472–Cys-487, Cys-489–Cys-498, Cys-505–Cys-516, Cys-510–Cys-522, and Cys-524–Cys-533. The tract at residues 576–614 is disordered; the sequence is PQAQSPPRRGQEPTESSKTRKAQVKPTPTSEKKKESREL. Composition is skewed to basic and acidic residues over residues 584–593 and 605–614; these read RGQEPTESSK and SEKKKESREL. 2 consecutive EGF-like domains span residues 650 to 684 and 716 to 753; these read DSVD…SNCT and AIDG…VDCS. Disulfide bonds link Cys-654–Cys-666, Cys-659–Cys-672, Cys-674–Cys-683, Cys-720–Cys-730, Cys-724–Cys-741, and Cys-743–Cys-752. NHL repeat units lie at residues 1276-1317, 1334-1378, 1398-1441, and 1470-1513; these read DSCG…IDTT, RTCA…VVHD, SASA…VRKL, and AVSL…VSAR.

It belongs to the tenascin family. Teneurin subfamily. Post-translationally, probably proteolytically processed to generate a N-terminal intracellular domain. Isoform 1 is mainly expressed in organs derived from the mesoderm, including the pharynx, vulva muscles, gonad distal tip cells, intestine and several tail neurons. Isoform 2 is mainly expressed in the organs derived from the ectoderm, including hypodermal cells, head ganglion neurons and tail neurons (at protein level).

It is found in the nucleus. Its subcellular location is the cell membrane. It localises to the membrane. Functionally, plays a role in the gonadal basement membrane maintenance and/or adhesion early in development. Contributes to the guidance of pharyngeal neurons. The sequence is that of Teneurin-1 (ten-1) from Caenorhabditis elegans.